Reading from the N-terminus, the 969-residue chain is Chromosome transmission fidelity protein 18 homolog (969 aa).

Residues 30-97 (EGTRDQAPPG…APSSPMVKRP (68 aa)) are disordered. Phosphothreonine is present on Thr-51. Residue Ser-221 is modified to Phosphoserine. Disordered stretches follow at residues 250-269 (SEGE…APGQ) and 318-340 (RKPR…GKWK). Positions 257-268 (LEGPPAEEPAPG) are enriched in low complexity. ATP is bound at residue 369 to 376 (GPPGLGKT). Residues 856–889 (ARSGPQVDQGSSGPASLWTDSGEKGTRQPAPRNH) form a disordered region. A compositionally biased stretch (basic and acidic residues) spans 876-889 (SGEKGTRQPAPRNH).

It belongs to the activator 1 small subunits family. CTF18 subfamily. Component of the CTF18-RFC complex, which consists of CTF18, CTF8, DCC1, RFC2, RFC3, RFC4 and RFC5. During assembly of the CTF18-RFC complex, CTF18 may first assemble into a subcomplex with RFC2, RFC3, RFC4 and RFC5. CTF18 then interacts directly with CTF8, which in turn interacts with DCC1. The CTF18-RFC complex associates with PCNA and with DNA polymerase POLH. The CTF18-RFC complex does not interact with the Rad9/Rad1/Hus1 complex. CTF18 interacts with SMC1A and RAD21. Interacts with DDX11.

The protein resides in the nucleus. In terms of biological role, chromosome cohesion factor involved in sister chromatid cohesion and fidelity of chromosome transmission. Component of one of the cell nuclear antigen loader complexes, CTF18-replication factor C (CTF18-RFC), which consists of CTF18, CTF8, DCC1, RFC2, RFC3, RFC4 and RFC5. The CTF18-RFC complex binds to single-stranded and primed DNAs and has weak ATPase activity that is stimulated by the presence of primed DNA, replication protein A (RPA) and by proliferating cell nuclear antigen (PCNA). The CTF18-RFC complex catalyzes the ATP-dependent loading of PCNA onto primed and gapped DNA. Interacts with and stimulates DNA polymerase POLH. During DNA repair synthesis, involved in loading DNA polymerase POLE at the sites of local damage. This is Chromosome transmission fidelity protein 18 homolog (Chtf18) from Mus musculus (Mouse).